The sequence spans 308 residues: Protein doublecortin (308 aa).

Residues 21-104 (ARVILFRNGD…AEPLNTEVIP (84 aa)) enclose the Doublecortin 1 domain. The disordered stretch occupies residues 115–167 (EVSDQDDEPKPSKPFVSSVPPPPTPTPTSSSGTTTTSQPTLSASPSVSSAQSP). Low complexity predominate over residues 141–167 (PTSSSGTTTTSQPTLSASPSVSSAQSP). Residues 194–277 (KVIMCFRNGD…GETLNPLDFS (84 aa)) form the Doublecortin 2 domain. The segment at 282-308 (EHVKQKKLQEQQQQASEQQKPQEQEIF) is disordered. Residues 291–300 (EQQQQASEQQ) show a composition bias toward low complexity.

Interacts with lis1.

The protein localises to the cytoplasm. Its subcellular location is the cytoskeleton. In terms of biological role, has a cytoskeleton-independent function in chemotactic signaling during development. The protein is Protein doublecortin (dcx) of Dictyostelium discoideum (Social amoeba).